Here is a 149-residue protein sequence, read N- to C-terminus: MTTVTLVGTRLAEVGAEFVYRGEASGCEGCPYRDQCLNLTTGNRYRITNVRQSGQTLDCAVHENGVRAVEVEPAPIQANVPSKGAYAGSKASLPGPCPHTECPSHPYCEPAGAEFDEEYRISEIVGDPPHDYCMLDRDLTLVELEAPGE.

This sequence belongs to the UPF0179 family.

This is UPF0179 protein rrnAC1064 from Haloarcula marismortui (strain ATCC 43049 / DSM 3752 / JCM 8966 / VKM B-1809) (Halobacterium marismortui).